Consider the following 72-residue polypeptide: DNA-directed RNA polymerase subunit omega (72 aa).

The protein belongs to the RNA polymerase subunit omega family. In terms of assembly, the RNAP catalytic core consists of 2 alpha, 1 beta, 1 beta' and 1 omega subunit. When a sigma factor is associated with the core the holoenzyme is formed, which can initiate transcription.

It carries out the reaction RNA(n) + a ribonucleoside 5'-triphosphate = RNA(n+1) + diphosphate. Promotes RNA polymerase assembly. Latches the N- and C-terminal regions of the beta' subunit thereby facilitating its interaction with the beta and alpha subunits. The protein is DNA-directed RNA polymerase subunit omega of Francisella tularensis subsp. holarctica (strain LVS).